The following is a 346-amino-acid chain: WD repeat-containing protein LWD1 (346 aa).

An N-acetylmethionine modification is found at Met1. WD repeat units lie at residues 79–121 (EHPY…SRVE), 133–173 (EFCG…VDTQ), 176–214 (AHDK…HSTI), and 265–305 (RHQA…QHVE).

The protein localises to the nucleus. Functionally, clock protein essential for the proper expression phase and period length of both the oscillator and output genes known to participate in photoperiod sensing. Required for the expression of APRR9, APRR7, and APRR5. Regulated by APRR9 and APRR7 at the transcriptional level, indicating the existence of a positive feedback loop within the circadian clock. May function to delay the expression of the morning genes until dawn approaches. This Arabidopsis thaliana (Mouse-ear cress) protein is WD repeat-containing protein LWD1 (LWD1).